Consider the following 351-residue polypeptide: 1-aminocyclopropane-1-carboxylate oxidase homolog 4 (351 aa).

The 105-residue stretch at 200–304 (KSQYMVGQHY…AIVFSTFMRA (105 aa)) folds into the Fe2OG dioxygenase domain. Fe cation contacts are provided by histidine 224, aspartate 226, and histidine 280. Arginine 291 provides a ligand contact to 2-oxoglutarate.

Belongs to the iron/ascorbate-dependent oxidoreductase family. Fe(2+) serves as cofactor.

This is 1-aminocyclopropane-1-carboxylate oxidase homolog 4 from Arabidopsis thaliana (Mouse-ear cress).